Reading from the N-terminus, the 111-residue chain is Prostate and testis expressed protein 2 (111 aa).

An N-terminal signal peptide occupies residues Met-1–Asn-18. A UPAR/Ly6 domain is found at Leu-27–Pro-108. 4 disulfides stabilise this stretch: Cys-29–Cys-55, Cys-32–Cys-40, Cys-47–Cys-78, and Cys-82–Cys-99.

This sequence belongs to the PATE family. As to expression, expressed in prostate, testis, brain and lung.

The protein localises to the secreted. This is Prostate and testis expressed protein 2 (Pate2) from Mus musculus (Mouse).